We begin with the raw amino-acid sequence, 318 residues long: MGVVVYAPASIGNVSVGFDVLGAAVSPVDGTLLGDRVQVKAGTEPFSLNTAGHFVSKLPTDPKENIVYDCWVVFARELDKKGIELKPLEMTLEKNMPIGSGLGSSACSIVAALDALNRFHDQPLNETELLALMGEMEGKISGGIHYDNVAPCYLGGVQLMLEELGIISQEVPCFDEWYWVMAYPGIKVSTAEAREILPSQYRRQDIIAHGRHLAGFIHACHSGQPELAAKMIKDVIAEPYREKLLPGFANARQYAASAGALATGISGSGPTLFSICKQKDVAERVARWLEQNYVQNEEGFVHVCRLDKQGSKVTGSEL.

97–107 (PIGSGLGSSAC) lines the ATP pocket.

Belongs to the GHMP kinase family. Homoserine kinase subfamily.

The protein localises to the cytoplasm. It carries out the reaction L-homoserine + ATP = O-phospho-L-homoserine + ADP + H(+). Its pathway is amino-acid biosynthesis; L-threonine biosynthesis; L-threonine from L-aspartate: step 4/5. Catalyzes the ATP-dependent phosphorylation of L-homoserine to L-homoserine phosphate. The polypeptide is Homoserine kinase (Vibrio parahaemolyticus serotype O3:K6 (strain RIMD 2210633)).